The chain runs to 62 residues: DNA-directed RNA polymerase subunit Rpo10 (62 aa).

Zn(2+)-binding residues include C6, C9, C43, and C44.

Belongs to the archaeal Rpo10/eukaryotic RPB10 RNA polymerase subunit family. Part of the RNA polymerase complex. Zn(2+) serves as cofactor.

The protein localises to the cytoplasm. The catalysed reaction is RNA(n) + a ribonucleoside 5'-triphosphate = RNA(n+1) + diphosphate. DNA-dependent RNA polymerase (RNAP) catalyzes the transcription of DNA into RNA using the four ribonucleoside triphosphates as substrates. This is DNA-directed RNA polymerase subunit Rpo10 from Methanosarcina mazei (strain ATCC BAA-159 / DSM 3647 / Goe1 / Go1 / JCM 11833 / OCM 88) (Methanosarcina frisia).